Here is a 263-residue protein sequence, read N- to C-terminus: Isoprenyl transferase (263 aa).

Asp-26 is a catalytic residue. Residue Asp-26 participates in Mg(2+) binding. Substrate is bound by residues 27–30 (GNGR), Trp-31, Arg-39, His-43, and 71–73 (SSE). The Proton acceptor role is filled by Asn-74. Substrate contacts are provided by residues Trp-75, Arg-77, Arg-191, and 197–199 (RIS). Glu-210 lines the Mg(2+) pocket. The segment at 241–263 (GRTSEQIAGQQENKNTVSNEDRV) is disordered. A compositionally biased stretch (polar residues) spans 243-263 (TSEQIAGQQENKNTVSNEDRV).

Belongs to the UPP synthase family. Homodimer. It depends on Mg(2+) as a cofactor.

Functionally, catalyzes the condensation of isopentenyl diphosphate (IPP) with allylic pyrophosphates generating different type of terpenoids. This Nitrosomonas europaea (strain ATCC 19718 / CIP 103999 / KCTC 2705 / NBRC 14298) protein is Isoprenyl transferase.